Reading from the N-terminus, the 489-residue chain is Phosphoenolpyruvate carboxykinase (ATP) (489 aa).

Residues Arg53 and Tyr159 each coordinate substrate. ATP contacts are provided by residues His185, 208–216, Asp258, Arg300, 409–410, and Ser415; these read GLSGTGKTT and KI. Residue Arg300 coordinates substrate.

The protein belongs to the phosphoenolpyruvate carboxykinase (ATP) family.

The protein localises to the cytoplasm. The catalysed reaction is oxaloacetate + ATP = phosphoenolpyruvate + ADP + CO2. It participates in carbohydrate biosynthesis; gluconeogenesis. Functionally, involved in the gluconeogenesis. Catalyzes the conversion of oxaloacetate (OAA) to phosphoenolpyruvate (PEP) through direct phosphoryl transfer between the nucleoside triphosphate and OAA. This chain is Phosphoenolpyruvate carboxykinase (ATP), found in Aeropyrum pernix (strain ATCC 700893 / DSM 11879 / JCM 9820 / NBRC 100138 / K1).